Consider the following 151-residue polypeptide: HTH-type transcriptional regulator FL11 (151 aa).

The 62-residue stretch at 5-66 (LDEIDRRIIK…IVNPEALGYS (62 aa)) folds into the HTH asnC-type domain. Residues 24-43 (LREISKITGLAESTIHERIK) constitute a DNA-binding region (H-T-H motif). 98-104 (ETTGDYD) is an L-arginine binding site. Residues asparagine 118, aspartate 122, and 133-135 (THT) each bind L-lysine. L-arginine-binding positions include aspartate 122 and 133 to 135 (THT).

As to quaternary structure, homodimer. Binds DNA as a dimer and an octamer.

Its activity is regulated as follows. In the famine mode, FL11 forms dimers and acts as a repressor, leading to growth arrest. In the feast mode, in the presence of high concentrations of lysine or arginine, four dimers assemble into an octamer and cover the fl11 and lysine biosynthesis promoters. This leads to the inhibition of fl11 expression and lysine biosynthesis, decrease of the FL11 concentration in the cell, derepression of the target genes and activation of the metabolism. DNA-binding protein involved in the repression of transcription of a large number of genes, thereby arresting growth, in response to environmental changes. This chain is HTH-type transcriptional regulator FL11, found in Pyrococcus abyssi (strain GE5 / Orsay).